A 381-amino-acid polypeptide reads, in one-letter code: p55-v-Fos-transforming protein (381 aa).

Residues 137–200 (EEKRRIRRER…EKLEFILAAH (64 aa)) form the bZIP domain. Residues 139 to 159 (KRRIRRERNKMAAAKCRNRRR) form a basic motif region. The interval 165-193 (LQAETDQLEDKKSALQTEIANLLKEKEKL) is leucine-zipper.

Belongs to the bZIP family. Fos subfamily.

Its subcellular location is the host nucleus. The protein is p55-v-Fos-transforming protein (V-FOS) of Mus musculus (Mouse).